Reading from the N-terminus, the 354-residue chain is MSSAFRTVWWEAGQVCLIDQRLLPNETSVVRCTTVEEVARAIRTMQIRGAPAIGCAAAYGMALAAHHAASTATDGDHQQVYDQLAAAKTILDAQRPTAVNLSWATRRVQEKVRRLIPAAPNTLARAALEEAHAILAEDLAMCYAIGRHGVALIPPRGHVLTHCNAGGLATAGYGTALAPIRMAHEQGRPIHVYVDETRPFLQGARLTAWELLQERIPMTLITDTMAGHFMQRGAIDCVIVGADRIVANGDVANKIGTYSLAVLARAHGIPFYVAAPSSTIDLSLPNGEAIPIEERSPDEVTTCFGRRIAPEGAVAAHPAFDVTPSHLVTAIITECGVIYPPFEEPLRRVVAGSE.

Residues 48–50 (RGA), Arg-95, and Gln-202 contribute to the substrate site. The Proton donor role is filled by Asp-243. Residue 253-254 (NK) coordinates substrate.

This sequence belongs to the eIF-2B alpha/beta/delta subunits family. MtnA subfamily.

The enzyme catalyses 5-(methylsulfanyl)-alpha-D-ribose 1-phosphate = 5-(methylsulfanyl)-D-ribulose 1-phosphate. It participates in amino-acid biosynthesis; L-methionine biosynthesis via salvage pathway; L-methionine from S-methyl-5-thio-alpha-D-ribose 1-phosphate: step 1/6. Functionally, catalyzes the interconversion of methylthioribose-1-phosphate (MTR-1-P) into methylthioribulose-1-phosphate (MTRu-1-P). This Roseiflexus castenholzii (strain DSM 13941 / HLO8) protein is Methylthioribose-1-phosphate isomerase.